A 181-amino-acid chain; its full sequence is Ferritin heavy chain (181 aa).

Met-1 carries the N-acetylmethionine modification. Thr-2 bears the N-acetylthreonine; in Ferritin heavy chain, N-terminally processed mark. Residues 11 to 160 (QNYHQDSEAA…DHITNLHRMG (150 aa)) enclose the Ferritin-like diiron domain. Ser-179 is subject to Phosphoserine.

Belongs to the ferritin family. As to quaternary structure, oligomer of 24 subunits. There are two types of subunits: L (light) chain and H (heavy) chain. The major chain can be light or heavy, depending on the species and tissue type. The functional molecule forms a roughly spherical shell with a diameter of 12 nm and contains a central cavity into which the insoluble mineral iron core is deposited. Interacts with NCOA4; NCOA4 promotes targeting of the iron-binding ferritin complex to autolysosomes following starvation or iron depletion. (Microbial infection) Interacts with classical swine fever virus protein NS4B. In terms of assembly, (Microbial infection) Interacts with Porcine circovirus 2 ORF4 protein.

The protein localises to the cytoplasm. It is found in the lysosome. The protein resides in the cytoplasmic vesicle. Its subcellular location is the autophagosome. It carries out the reaction 4 Fe(2+) + O2 + 4 H(+) = 4 Fe(3+) + 2 H2O. Its function is as follows. Stores iron in a soluble, non-toxic, readily available form. Important for iron homeostasis. Has ferroxidase activity. Iron is taken up in the ferrous form and deposited as ferric hydroxides after oxidation. Also plays a role in delivery of iron to cells. Mediates iron uptake in capsule cells of the developing kidney. Delivery to lysosomes is mediated by the cargo receptor NCOA4 for autophagic degradation and release of iron. (Microbial infection) Is unable to assume its function upon interaction with viral proteins, thereby increasing Fe concentration in the cytoplasm. This would inhibit the accumulation of reactive oxygen in host cells, leading to reduced apoptosis and increasing the survival of virus infected cell. The sequence is that of Ferritin heavy chain (FTH1) from Sus scrofa (Pig).